A 291-amino-acid chain; its full sequence is Short-chain dehydrogenase/reductase GME11359 (291 aa).

Positions 18, 67, 96, 177, 181, and 209 each coordinate NADP(+). Y177 acts as the Proton acceptor in catalysis. K181 functions as the Lowers pKa of active site Tyr in the catalytic mechanism.

It belongs to the short-chain dehydrogenases/reductases (SDR) family.

It functions in the pathway secondary metabolite biosynthesis. In terms of biological role, short-chain dehydrogenase/reductase; part of the gene cluster that mediates the biosynthesis of dibenzodioxocinones such as pestalotiollide B, a novel class of inhibitors against cholesterol ester transfer protein (CEPT). The biosynthesis initiates from condensation of acetate and malonate units catalyzed by the non-reducing PKS pks8/GME11356. Pks8/GME11356 lacks a thioesterase (TE) domain, which is important to the cyclizing of the third ring of atrochrysone carboxylic acid, and the esterase GME11355 might play the role of TE and catalyzes the cyclization reaction of the C ring. The lactamase-like protein GME11357 (or other beta-lactamases in Pestalotiopsis microspora) probably hydrolyzes the thioester bond between the ACP of pks8/GME11356 and the intermediate to release atrochrysone carboxylic acid, which is spontaneously dehydrates to form endocrocin anthrone. Endocrocin anthrone is further converted to emodin via the endocrocin intermediate. Emodin is then oxidized by several enzymes such as the Baeyer-Villiger oxidase GME11358, the oxidoreductase GME11367, the short chain dehydrogenase/reductase GME11373, as well as by other oxidoreductases from the cluster, to modify the A and C rings and open the B ring, and finally yield monodictyphenone. The prenyltransferase GME11375 may catalyze the addition reaction between the C5 side chains and the carbon bone of dibenzodioxocinones. The remaining biochemical reactions to the final product dibenzodioxocinones should be methylation catalyzed by methyltransferase GME11366 and reduction and lactonization reaction catalyzed by a series of oxidordeuctases. The polypeptide is Short-chain dehydrogenase/reductase GME11359 (Pestalotiopsis microspora).